A 657-amino-acid chain; its full sequence is tRNA 5-methylaminomethyl-2-thiouridine biosynthesis bifunctional protein MnmC (657 aa).

Residues 1–233 (MPRGLILATP…KRDMTVAAFP (233 aa)) form a tRNA (mnm(5)s(2)U34)-methyltransferase region. The interval 256–657 (LGAGLAGCSV…RALRHGKHAA (402 aa)) is FAD-dependent cmnm(5)s(2)U34 oxidoreductase.

It in the N-terminal section; belongs to the methyltransferase superfamily. tRNA (mnm(5)s(2)U34)-methyltransferase family. The protein in the C-terminal section; belongs to the DAO family. Requires FAD as cofactor.

The protein resides in the cytoplasm. It catalyses the reaction 5-aminomethyl-2-thiouridine(34) in tRNA + S-adenosyl-L-methionine = 5-methylaminomethyl-2-thiouridine(34) in tRNA + S-adenosyl-L-homocysteine + H(+). Catalyzes the last two steps in the biosynthesis of 5-methylaminomethyl-2-thiouridine (mnm(5)s(2)U) at the wobble position (U34) in tRNA. Catalyzes the FAD-dependent demodification of cmnm(5)s(2)U34 to nm(5)s(2)U34, followed by the transfer of a methyl group from S-adenosyl-L-methionine to nm(5)s(2)U34, to form mnm(5)s(2)U34. The protein is tRNA 5-methylaminomethyl-2-thiouridine biosynthesis bifunctional protein MnmC of Ralstonia nicotianae (strain ATCC BAA-1114 / GMI1000) (Ralstonia solanacearum).